The primary structure comprises 830 residues: Lon protease 3 (830 aa).

The region spanning 19-213 (VPLLPLRDII…RLIELMQAEI (195 aa)) is the Lon N-terminal domain. ATP is bound at residue 367–374 (GPPGVGKT). In terms of domain architecture, Lon proteolytic spans 604 to 784 (RDEVGLVNGL…DDVLREALIL (181 aa)). Residues S690 and K733 contribute to the active site. Positions 811–823 (PVKAPPAAAGEPT) are enriched in low complexity. The interval 811-830 (PVKAPPAAAGEPTPAAPPGA) is disordered.

The protein belongs to the peptidase S16 family. Homohexamer. Organized in a ring with a central cavity.

It localises to the cytoplasm. The enzyme catalyses Hydrolysis of proteins in presence of ATP.. Functionally, ATP-dependent serine protease that mediates the selective degradation of mutant and abnormal proteins as well as certain short-lived regulatory proteins. Required for cellular homeostasis and for survival from DNA damage and developmental changes induced by stress. Degrades polypeptides processively to yield small peptide fragments that are 5 to 10 amino acids long. Binds to DNA in a double-stranded, site-specific manner. The protein is Lon protease 3 of Sorangium cellulosum (strain So ce56) (Polyangium cellulosum (strain So ce56)).